The following is a 291-amino-acid chain: 4-diphosphocytidyl-2-C-methyl-D-erythritol kinase (291 aa).

Lys10 is a catalytic residue. Residue 94 to 104 (PVSAGLAGGSS) coordinates ATP. Asp136 is a catalytic residue.

This sequence belongs to the GHMP kinase family. IspE subfamily.

The enzyme catalyses 4-CDP-2-C-methyl-D-erythritol + ATP = 4-CDP-2-C-methyl-D-erythritol 2-phosphate + ADP + H(+). The protein operates within isoprenoid biosynthesis; isopentenyl diphosphate biosynthesis via DXP pathway; isopentenyl diphosphate from 1-deoxy-D-xylulose 5-phosphate: step 3/6. Functionally, catalyzes the phosphorylation of the position 2 hydroxy group of 4-diphosphocytidyl-2C-methyl-D-erythritol. The sequence is that of 4-diphosphocytidyl-2-C-methyl-D-erythritol kinase from Listeria welshimeri serovar 6b (strain ATCC 35897 / DSM 20650 / CCUG 15529 / CIP 8149 / NCTC 11857 / SLCC 5334 / V8).